A 390-amino-acid chain; its full sequence is NADH-quinone oxidoreductase subunit D (390 aa).

Belongs to the complex I 49 kDa subunit family. In terms of assembly, NDH-1 is composed of 14 different subunits. Subunits NuoB, C, D, E, F, and G constitute the peripheral sector of the complex.

It is found in the cell inner membrane. The catalysed reaction is a quinone + NADH + 5 H(+)(in) = a quinol + NAD(+) + 4 H(+)(out). Functionally, NDH-1 shuttles electrons from NADH, via FMN and iron-sulfur (Fe-S) centers, to quinones in the respiratory chain. The immediate electron acceptor for the enzyme in this species is believed to be ubiquinone. Couples the redox reaction to proton translocation (for every two electrons transferred, four hydrogen ions are translocated across the cytoplasmic membrane), and thus conserves the redox energy in a proton gradient. This chain is NADH-quinone oxidoreductase subunit D, found in Geotalea uraniireducens (strain Rf4) (Geobacter uraniireducens).